The following is a 447-amino-acid chain: N-succinylarginine dihydrolase (447 aa).

Residues 19-28 (AGLSFGNEAS), Asn110, and 137-138 (HR) contribute to the substrate site. Glu174 is an active-site residue. Arg212 serves as a coordination point for substrate. His248 is a catalytic residue. Substrate contacts are provided by Asp250 and Asn359. Catalysis depends on Cys365, which acts as the Nucleophile.

This sequence belongs to the succinylarginine dihydrolase family. Homodimer.

The catalysed reaction is N(2)-succinyl-L-arginine + 2 H2O + 2 H(+) = N(2)-succinyl-L-ornithine + 2 NH4(+) + CO2. The protein operates within amino-acid degradation; L-arginine degradation via AST pathway; L-glutamate and succinate from L-arginine: step 2/5. Its function is as follows. Catalyzes the hydrolysis of N(2)-succinylarginine into N(2)-succinylornithine, ammonia and CO(2). The sequence is that of N-succinylarginine dihydrolase from Escherichia coli O9:H4 (strain HS).